We begin with the raw amino-acid sequence, 183 residues long: Ferritin heavy chain (183 aa).

N-acetylmethionine is present on Met1. N-acetylthreonine; in Ferritin heavy chain, N-terminally processed is present on Thr2. Residues 11–160 (QNYHQDSEAA…DHVTNLRKMG (150 aa)) enclose the Ferritin-like diiron domain. Fe cation contacts are provided by Glu28, Glu63, His66, Glu108, and Gln142. A phosphoserine mark is found at Ser179 and Ser183.

This sequence belongs to the ferritin family. As to quaternary structure, oligomer of 24 subunits. There are two types of subunits: L (light) chain and H (heavy) chain. The major chain can be light or heavy, depending on the species and tissue type. In the human liver, the heavy chain is predominant. The functional molecule forms a roughly spherical shell with a diameter of 12 nm and contains a central cavity into which the insoluble mineral iron core is deposited. Interacts with NCOA4; NCOA4 promotes targeting of the iron-binding ferritin complex to autolysosomes following starvation or iron depletion. In terms of tissue distribution, expressed in the liver.

Its subcellular location is the cytoplasm. It localises to the lysosome. The protein resides in the cytoplasmic vesicle. The protein localises to the autophagosome. The catalysed reaction is 4 Fe(2+) + O2 + 4 H(+) = 4 Fe(3+) + 2 H2O. Stores iron in a soluble, non-toxic, readily available form. Important for iron homeostasis. Has ferroxidase activity. Iron is taken up in the ferrous form and deposited as ferric hydroxides after oxidation. Also plays a role in delivery of iron to cells. Mediates iron uptake in capsule cells of the developing kidney. Delivery to lysosomes is mediated by the cargo receptor NCOA4 for autophagic degradation and release of iron. The chain is Ferritin heavy chain (FTH1) from Homo sapiens (Human).